Consider the following 305-residue polypeptide: NADH-cytochrome b5 reductase 1 (305 aa).

Residues Val-8–Tyr-28 form a helical membrane-spanning segment. The 113-residue stretch at Asn-44 to Ala-156 folds into the FAD-binding FR-type domain. FAD is bound by residues Asp-136–Asn-166 and Val-175–Leu-210.

Belongs to the flavoprotein pyridine nucleotide cytochrome reductase family. The cofactor is FAD.

Its subcellular location is the membrane. It catalyses the reaction 2 Fe(III)-[cytochrome b5] + NADH = 2 Fe(II)-[cytochrome b5] + NAD(+) + H(+). Its function is as follows. NADH-cytochrome b5 reductases are involved in desaturation and elongation of fatty acids, cholesterol biosynthesis, drug metabolism, and, in erythrocyte, methemoglobin reduction. This is NADH-cytochrome b5 reductase 1 (CYB5R1) from Bos taurus (Bovine).